The following is a 464-amino-acid chain: FERM domain-containing protein 8 (464 aa).

Methionine 1 is modified (N-acetylmethionine). A disordered region spans residues 1 to 22; sequence MDGTEGSAGQPGPAERSHRSSV. Serine 24 carries the post-translational modification Phosphoserine. The 347-residue stretch at 30–376 folds into the FERM domain; the sequence is ADVLVYLADD…YCIELSQAAE (347 aa). The tract at residues 376 to 408 is disordered; that stretch reads EPAGPQDSATGSPSDPSSSLAPVQRPKLRRQGS. Residues serine 383, serine 387, and serine 408 each carry the phosphoserine modification. Threonine 419 is subject to Phosphothreonine. 2 positions are modified to phosphoserine: serine 439 and serine 446.

As to quaternary structure, interacts with iRhom1/RHBDF1 and iRhom2/RHBDF2 (via cytoplasmic N-termini); this interaction leads to mutual protein stabilization. Interacts with ADAM17; this interaction is indirect and mediated by iRhom proteins. Interacts with LRP6; this interaction affects LRP6-binding to AXIN1. In terms of tissue distribution, widely expressed, with high expression in heart and spleen.

It localises to the cytoplasm. It is found in the cytosol. The protein localises to the cell membrane. Functionally, promotes the cell surface stability of iRhom1/RHBDF1 and iRhom2/RHBDF2 and prevents their degradation via the endolysosomal pathway. By acting on iRhoms, involved in ADAM17-mediated shedding of TNF, amphiregulin/AREG, HBEGF and TGFA from the cell surface. Negatively regulates Wnt signaling, possibly by antagonizing the recruitment of AXIN1 to LRP6. This Homo sapiens (Human) protein is FERM domain-containing protein 8 (FRMD8).